Here is a 198-residue protein sequence, read N- to C-terminus: Putative protein-methionine-sulfoxide reductase subunit YedZ1 (198 aa).

The next 4 membrane-spanning stretches (helical) occupy residues 12–32 (WLRV…MSGW), 63–83 (FAAM…NIFS), 124–144 (AAYL…LVLW), and 167–187 (FIGM…VALV).

Belongs to the HupC/HyaC/HydC family.

It is found in the cell inner membrane. Its function is as follows. Part of the YedY1-YedZ1 system that may repair oxidized proteins containing methionine sulfoxide residues (Met-O). The polypeptide is Putative protein-methionine-sulfoxide reductase subunit YedZ1 (Azospira oryzae (strain ATCC BAA-33 / DSM 13638 / PS) (Dechlorosoma suillum)).